The chain runs to 385 residues: UPF0284 protein PMM0439 (385 aa).

The protein belongs to the UPF0284 family.

The polypeptide is UPF0284 protein PMM0439 (Prochlorococcus marinus subsp. pastoris (strain CCMP1986 / NIES-2087 / MED4)).